The primary structure comprises 963 residues: Protein translocase subunit SecA (963 aa).

ATP contacts are provided by residues Q87, 105 to 109 (GEGKT), and D524. Positions 946, 948, 957, and 958 each coordinate Zn(2+).

It belongs to the SecA family. In terms of assembly, monomer and homodimer. Part of the essential Sec protein translocation apparatus which comprises SecA, SecYEG and auxiliary proteins SecDF-YajC and YidC. Requires Zn(2+) as cofactor.

The protein localises to the cell inner membrane. It is found in the cytoplasm. The catalysed reaction is ATP + H2O + cellular proteinSide 1 = ADP + phosphate + cellular proteinSide 2.. Its function is as follows. Part of the Sec protein translocase complex. Interacts with the SecYEG preprotein conducting channel. Has a central role in coupling the hydrolysis of ATP to the transfer of proteins into and across the cell membrane, serving both as a receptor for the preprotein-SecB complex and as an ATP-driven molecular motor driving the stepwise translocation of polypeptide chains across the membrane. This Methylobacterium radiotolerans (strain ATCC 27329 / DSM 1819 / JCM 2831 / NBRC 15690 / NCIMB 10815 / 0-1) protein is Protein translocase subunit SecA.